Here is a 700-residue protein sequence, read N- to C-terminus: Elongation factor G (700 aa).

The tr-type G domain maps to 8-290; it reads ERYRNIGISA…AVIDYLPSPV (283 aa). GTP-binding positions include 17–24, 88–92, and 142–145; these read AHIDAGKT, DTPGH, and NKMD.

This sequence belongs to the TRAFAC class translation factor GTPase superfamily. Classic translation factor GTPase family. EF-G/EF-2 subfamily.

The protein localises to the cytoplasm. In terms of biological role, catalyzes the GTP-dependent ribosomal translocation step during translation elongation. During this step, the ribosome changes from the pre-translocational (PRE) to the post-translocational (POST) state as the newly formed A-site-bound peptidyl-tRNA and P-site-bound deacylated tRNA move to the P and E sites, respectively. Catalyzes the coordinated movement of the two tRNA molecules, the mRNA and conformational changes in the ribosome. The sequence is that of Elongation factor G from Paracidovorax citrulli (strain AAC00-1) (Acidovorax citrulli).